A 137-amino-acid chain; its full sequence is Putative pre-16S rRNA nuclease (137 aa).

Belongs to the YqgF nuclease family.

It is found in the cytoplasm. Functionally, could be a nuclease involved in processing of the 5'-end of pre-16S rRNA. The polypeptide is Putative pre-16S rRNA nuclease (Buchnera aphidicola subsp. Baizongia pistaciae (strain Bp)).